A 267-amino-acid chain; its full sequence is Thiamine thiazole synthase (267 aa).

NAD(+)-binding positions include serine 41, 60-61 (ER), glycine 68, valine 132, and 160-162 (HVD). Residues aspartate 162 and histidine 177 each coordinate Fe cation. NAD(+) is bound at residue methionine 227. Position 237 (arginine 237) interacts with glycine.

The protein belongs to the THI4 family. Homooctamer; tetramer of dimers. Fe(2+) is required as a cofactor.

It catalyses the reaction hydrogen sulfide + glycine + NAD(+) = ADP-5-ethyl-4-methylthiazole-2-carboxylate + nicotinamide + 3 H2O + H(+). It participates in cofactor biosynthesis; thiamine diphosphate biosynthesis. In terms of biological role, involved in the biosynthesis of the thiazole moiety of thiamine. Catalyzes the conversion of NAD and glycine to adenosine diphosphate 5-(2-hydroxyethyl)-4-methylthiazole-2-carboxylate (ADT), an adenylated thiazole intermediate, using free sulfide as a source of sulfur. This chain is Thiamine thiazole synthase, found in Saccharolobus islandicus (strain Y.N.15.51 / Yellowstone #2) (Sulfolobus islandicus).